We begin with the raw amino-acid sequence, 807 residues long: Ecotropic viral integration site 5 ortholog (807 aa).

Residues 1–31 (MTLTTTTTASSAESQAKMDVKGGALPGEENL) are disordered. Thr33 is subject to Phosphothreonine. Phosphoserine is present on residues Ser58 and Ser64. The 185-residue stretch at 116–300 (GIPHHFRAIV…RIMDVFLSEG (185 aa)) folds into the Rab-GAP TBC domain. 3 coiled-coil regions span residues 352-463 (SIKL…ENNV), 494-583 (CLLE…ENQR), and 627-772 (REME…RGKF).

Interacts with Rab11.

The protein resides in the cytoplasm. The protein localises to the endosome. Its function is as follows. Functions as a GTPase-activating protein (GAP). During border cell migration in the ovary, acts as a GAP for Rab11 and is necessary for the maintenance of active receptor tyrosine kinases at the leading edge. The chain is Ecotropic viral integration site 5 ortholog (Evi5) from Drosophila melanogaster (Fruit fly).